The sequence spans 162 residues: MFLSEAGARPRAGEASASERRKWVKVFKACDEDNKGYLSREDFKVAIVMLFGYKPSKIEADAVMSSVNPNTSGVSLEGFLSAVKRKKEARLYRNEIRQIFTAFDVHYRGFLTLEDFKRAFSRVAPKLPARTVLEVFREADQDSDGHVSFRDFEYAMNHGQSK.

3 EF-hand domains span residues 18 to 53 (SERRKWVKVFKACDEDNKGYLSREDFKVAIVMLFGY), 91 to 126 (LYRNEIRQIFTAFDVHYRGFLTLEDFKRAFSRVAPK), and 127 to 162 (LPARTVLEVFREADQDSDGHVSFRDFEYAMNHGQSK). Asp140, Asp142, Asp144, His146, and Asp151 together coordinate Ca(2+).

In Mus musculus (Mouse), this protein is EF-hand calcium-binding domain-containing protein 11 (Efcab11).